The following is a 144-amino-acid chain: 3-dehydroquinate dehydratase (144 aa).

Tyr23 (proton acceptor) is an active-site residue. The substrate site is built by Asn74, His80, and Asp87. The Proton donor role is filled by His100. Residues 101 to 102 (LS) and Arg111 contribute to the substrate site.

This sequence belongs to the type-II 3-dehydroquinase family. As to quaternary structure, homododecamer.

The enzyme catalyses 3-dehydroquinate = 3-dehydroshikimate + H2O. The protein operates within metabolic intermediate biosynthesis; chorismate biosynthesis; chorismate from D-erythrose 4-phosphate and phosphoenolpyruvate: step 3/7. Catalyzes a trans-dehydration via an enolate intermediate. In Haemophilus ducreyi (strain 35000HP / ATCC 700724), this protein is 3-dehydroquinate dehydratase.